We begin with the raw amino-acid sequence, 291 residues long: Nitrogenase iron protein (291 aa).

ATP is bound at residue 11 to 18; that stretch reads GKGGIGKS. Cys99 contributes to the [4Fe-4S] cluster binding site. Arg102 is modified (ADP-ribosylarginine; by dinitrogenase reductase ADP-ribosyltransferase). Cys133 lines the [4Fe-4S] cluster pocket.

It belongs to the NifH/BchL/ChlL family. Homodimer. It depends on [4Fe-4S] cluster as a cofactor. Post-translationally, the reversible ADP-ribosylation of Arg-102 inactivates the nitrogenase reductase and regulates nitrogenase activity.

The enzyme catalyses N2 + 8 reduced [2Fe-2S]-[ferredoxin] + 16 ATP + 16 H2O = H2 + 8 oxidized [2Fe-2S]-[ferredoxin] + 2 NH4(+) + 16 ADP + 16 phosphate + 6 H(+). In terms of biological role, the key enzymatic reactions in nitrogen fixation are catalyzed by the nitrogenase complex, which has 2 components: the iron protein and the molybdenum-iron protein. This chain is Nitrogenase iron protein, found in Cereibacter sphaeroides (strain ATCC 17023 / DSM 158 / JCM 6121 / CCUG 31486 / LMG 2827 / NBRC 12203 / NCIMB 8253 / ATH 2.4.1.) (Rhodobacter sphaeroides).